The primary structure comprises 160 residues: SsrA-binding protein (160 aa).

This sequence belongs to the SmpB family.

It localises to the cytoplasm. In terms of biological role, required for rescue of stalled ribosomes mediated by trans-translation. Binds to transfer-messenger RNA (tmRNA), required for stable association of tmRNA with ribosomes. tmRNA and SmpB together mimic tRNA shape, replacing the anticodon stem-loop with SmpB. tmRNA is encoded by the ssrA gene; the 2 termini fold to resemble tRNA(Ala) and it encodes a 'tag peptide', a short internal open reading frame. During trans-translation Ala-aminoacylated tmRNA acts like a tRNA, entering the A-site of stalled ribosomes, displacing the stalled mRNA. The ribosome then switches to translate the ORF on the tmRNA; the nascent peptide is terminated with the 'tag peptide' encoded by the tmRNA and targeted for degradation. The ribosome is freed to recommence translation, which seems to be the essential function of trans-translation. The chain is SsrA-binding protein from Escherichia coli O6:K15:H31 (strain 536 / UPEC).